The sequence spans 432 residues: Trigger factor (432 aa).

Residues Gly163–Pro248 form the PPIase FKBP-type domain.

The protein belongs to the FKBP-type PPIase family. Tig subfamily.

The protein localises to the cytoplasm. The catalysed reaction is [protein]-peptidylproline (omega=180) = [protein]-peptidylproline (omega=0). Functionally, involved in protein export. Acts as a chaperone by maintaining the newly synthesized protein in an open conformation. Functions as a peptidyl-prolyl cis-trans isomerase. This is Trigger factor from Thermoanaerobacter pseudethanolicus (strain ATCC 33223 / 39E) (Clostridium thermohydrosulfuricum).